Here is a 750-residue protein sequence, read N- to C-terminus: Catalase-peroxidase 1 (750 aa).

A cross-link (tryptophyl-tyrosyl-methioninium (Trp-Tyr) (with M-264)) is located at residues 90–238; the sequence is WHSAGTYRVM…VSAAHMGLIY (149 aa). The Proton acceptor role is filled by histidine 91. Residues 199–218 are disordered; sequence NEGHKESGVIDGSESKKGHK. Positions 200-218 are enriched in basic and acidic residues; the sequence is EGHKESGVIDGSESKKGHK. Positions 238–264 form a cross-link, tryptophyl-tyrosyl-methioninium (Tyr-Met) (with W-90); that stretch reads YVNPEGPDGIPDPVAAARDIRTTFSRM. Heme b is bound at residue histidine 279.

Belongs to the peroxidase family. Peroxidase/catalase subfamily. As to quaternary structure, homodimer or homotetramer. Predominantly homodimeric. Heme b is required as a cofactor. In terms of processing, formation of the three residue Trp-Tyr-Met cross-link is important for the catalase, but not the peroxidase activity of the enzyme.

The protein localises to the cytoplasm. It carries out the reaction H2O2 + AH2 = A + 2 H2O. The catalysed reaction is 2 H2O2 = O2 + 2 H2O. Bifunctional enzyme with both catalase and broad-spectrum peroxidase activity. In Pyricularia oryzae (strain 70-15 / ATCC MYA-4617 / FGSC 8958) (Rice blast fungus), this protein is Catalase-peroxidase 1.